The primary structure comprises 115 residues: Superoxide reductase (115 aa).

Residues E14, H16, H41, H47, C102, and H105 each contribute to the Fe cation site.

The protein belongs to the desulfoferrodoxin family. As to quaternary structure, homotetramer. It depends on Fe cation as a cofactor.

The enzyme catalyses reduced [rubredoxin] + superoxide + 2 H(+) = oxidized [rubredoxin] + H2O2. Its function is as follows. Uses electrons from reduced NADP, by way of rubredoxin and an oxidoreductase, to catalyze the reduction of superoxide to hydrogen peroxide. This Pyrococcus horikoshii (strain ATCC 700860 / DSM 12428 / JCM 9974 / NBRC 100139 / OT-3) protein is Superoxide reductase (sorA).